We begin with the raw amino-acid sequence, 931 residues long: 3'-5' exonuclease DinG (931 aa).

An Exonuclease domain is found at 7–162; sequence VVIDVETTGN…DSDAEVTGLI (156 aa). The Helicase ATP-binding domain occupies 250 to 510; the sequence is LSELMPGYEK…KKMRQLFQRN (261 aa). 284 to 291 contacts ATP; the sequence is APPGIGKT. The short motif at 462–465 is the DEAH box element; that stretch reads DEAH. In terms of domain architecture, Helicase C-terminal spans 741–897; sequence DTARYIELMA…TIIILDRRIK (157 aa).

This sequence belongs to the helicase family. DinG subfamily. Type 2 sub-subfamily.

The protein localises to the cytoplasm. Its function is as follows. 3'-5' exonuclease. This chain is 3'-5' exonuclease DinG, found in Bacillus subtilis (strain 168).